A 402-amino-acid chain; its full sequence is Phosphoglycerate kinase (402 aa).

Residues 24-26, R40, 63-66, R122, and R155 contribute to the substrate site; these read DFN and HFGR. Residues K206, G297, E328, and 358–361 contribute to the ATP site; that span reads GGDS.

The protein belongs to the phosphoglycerate kinase family. Monomer.

Its subcellular location is the cytoplasm. The enzyme catalyses (2R)-3-phosphoglycerate + ATP = (2R)-3-phospho-glyceroyl phosphate + ADP. It functions in the pathway carbohydrate degradation; glycolysis; pyruvate from D-glyceraldehyde 3-phosphate: step 2/5. This chain is Phosphoglycerate kinase, found in Prochlorococcus marinus (strain MIT 9301).